Here is a 225-residue protein sequence, read N- to C-terminus: ATP-dependent dethiobiotin synthetase BioD 1 (225 aa).

An ATP-binding site is contributed by 13-18; sequence EVGKTV. Thr-17 is a binding site for Mg(2+). Residue Lys-38 is part of the active site. Position 42 (Ser-42) interacts with substrate. ATP-binding positions include Asp-55, 116–119, 176–177, 205–207, and Glu-212; these read EGAG, ND, and PWL. Asp-55 and Glu-116 together coordinate Mg(2+).

This sequence belongs to the dethiobiotin synthetase family. As to quaternary structure, homodimer. It depends on Mg(2+) as a cofactor.

The protein localises to the cytoplasm. The catalysed reaction is (7R,8S)-7,8-diammoniononanoate + CO2 + ATP = (4R,5S)-dethiobiotin + ADP + phosphate + 3 H(+). It participates in cofactor biosynthesis; biotin biosynthesis; biotin from 7,8-diaminononanoate: step 1/2. In terms of biological role, catalyzes a mechanistically unusual reaction, the ATP-dependent insertion of CO2 between the N7 and N8 nitrogen atoms of 7,8-diaminopelargonic acid (DAPA, also called 7,8-diammoniononanoate) to form a ureido ring. This is ATP-dependent dethiobiotin synthetase BioD 1 from Escherichia coli O157:H7.